Consider the following 361-residue polypeptide: Molybdopterin synthase catalytic subunit (361 aa).

Substrate contacts are provided by residues His101 to Arg102, Lys117, and Lys124 to Glu126.

This sequence belongs to the MoaE family. MOCS2B subfamily. In terms of assembly, heterotetramer; composed of 2 small (Mocs2A) and 2 large (Mocs2B) subunits.

The protein resides in the cytoplasm. It carries out the reaction 2 [molybdopterin-synthase sulfur-carrier protein]-C-terminal-Gly-aminoethanethioate + cyclic pyranopterin phosphate + H2O = molybdopterin + 2 [molybdopterin-synthase sulfur-carrier protein]-C-terminal Gly-Gly + 2 H(+). Its pathway is cofactor biosynthesis; molybdopterin biosynthesis. In terms of biological role, catalytic subunit of the molybdopterin synthase complex, a complex that catalyzes the conversion of precursor Z into molybdopterin. Acts by mediating the incorporation of 2 sulfur atoms from thiocarboxylated Mocs2A into precursor Z to generate a dithiolene group. The polypeptide is Molybdopterin synthase catalytic subunit (Drosophila persimilis (Fruit fly)).